The sequence spans 515 residues: Protein disulfide-isomerase (515 aa).

The first 20 residues, 1–20 (MRTFAPWILSLLGASAVASA), serve as a signal peptide directing secretion. 2 Thioredoxin domains span residues 21 to 136 (ADAT…QSLP) and 343 to 470 (VLDD…ENGK). Residues Cys-58, Cys-61, Cys-393, and Cys-396 each act as nucleophile in the active site. Disulfide bonds link Cys-58–Cys-61 and Cys-393–Cys-396. Basic and acidic residues-rich tracts occupy residues 472–496 (KVDALEVDPKKEQESGDATETRAAS) and 506–515 (SDDKSEHDEL). The interval 472-515 (KVDALEVDPKKEQESGDATETRAASDETETPAATSDDKSEHDEL) is disordered. Residues 512–515 (HDEL) carry the Prevents secretion from ER motif.

It belongs to the protein disulfide isomerase family.

It is found in the endoplasmic reticulum lumen. The enzyme catalyses Catalyzes the rearrangement of -S-S- bonds in proteins.. Participates in the folding of proteins containing disulfide bonds, may be involved in glycosylation, prolyl hydroxylation and triglyceride transfer. The sequence is that of Protein disulfide-isomerase (pdiA) from Aspergillus oryzae (strain ATCC 42149 / RIB 40) (Yellow koji mold).